The sequence spans 761 residues: MTSRVDTVDNAASTPDHPQPFAELGLKDDEYARIREILGRRPTDAELAMYSVMWSEHCSYKSSKVHLRYFGQTTTEEMRSAMLAGIGENAGVVDIGDGWAVTFKVESHNHPSYVEPYQGAATGVGGIVRDIMAMGARPIAVMDQLRFGAADAPDTRRVFDGVVRGIGGYGNSLGLPNIGGETVFDASYAGNPLVNALCAGVLRKEDLHLAFASGAGNKIILFGARTGLDGIGGVSVLASETFGGDEADGASRKKLPSVQVGDPFTEKVLIECCLELYAAHLVVGIQDLGGAGLSCATSELASAGDGGMHIDLDKVPLRATGMTPAEVLSSESQERMCAVVTPENVDAFMAVCRKWDVLATVIGEVTDGDRLRITWHGETVVDVPPRTVAHEGPVYQRPVARPDTQDALIADTAGGLARPASAAELRQTLLDMIGSPHLCSRAFITEQYDRYVRGNTVLAEHADSGVIRVDEQTGRGIALATDASGRYTLLDPYRGAQLALAEAYRNVAASGATPVAVTNCLNFGSPEDPGVMWQFSEAVRGLADGCVTLGIPVTGGNVSFYNQTGTTPILPTPVVGVLGVIDDVNRRIPTGFGTEPGETLILLGDTADEFDGSIWAQVAHDHLGGTPPKVDLAREQLLAQVLTAASRDGLVSAAHDLSEGGLIQAVVESALAGETGCRLLLPEGADPFVALFSESAGRVLVAVPRTEESRFMSMCEARQLPAVRIGVVDQGSDSVEVQGQFSVTLAELREIHEGVLPGLFG.

Over residues 1-13 (MTSRVDTVDNAAS) the composition is skewed to polar residues. A disordered region spans residues 1–23 (MTSRVDTVDNAASTPDHPQPFAE). H57 is an active-site residue. ATP contacts are provided by Y60 and K104. Residue E106 participates in Mg(2+) binding. Residues 107–110 (SHNH) and R129 each bind substrate. The active-site Proton acceptor is the H108. D130 lines the Mg(2+) pocket. Q259 serves as a coordination point for substrate. Position 287 (D287) interacts with Mg(2+). 331-333 (ESQ) provides a ligand contact to substrate. Positions 519 and 556 each coordinate ATP. Residue N557 participates in Mg(2+) binding. S559 lines the substrate pocket.

This sequence belongs to the FGAMS family. In terms of assembly, monomer. Part of the FGAM synthase complex composed of 1 PurL, 1 PurQ and 2 PurS subunits.

It localises to the cytoplasm. The enzyme catalyses N(2)-formyl-N(1)-(5-phospho-beta-D-ribosyl)glycinamide + L-glutamine + ATP + H2O = 2-formamido-N(1)-(5-O-phospho-beta-D-ribosyl)acetamidine + L-glutamate + ADP + phosphate + H(+). It participates in purine metabolism; IMP biosynthesis via de novo pathway; 5-amino-1-(5-phospho-D-ribosyl)imidazole from N(2)-formyl-N(1)-(5-phospho-D-ribosyl)glycinamide: step 1/2. Part of the phosphoribosylformylglycinamidine synthase complex involved in the purines biosynthetic pathway. Catalyzes the ATP-dependent conversion of formylglycinamide ribonucleotide (FGAR) and glutamine to yield formylglycinamidine ribonucleotide (FGAM) and glutamate. The FGAM synthase complex is composed of three subunits. PurQ produces an ammonia molecule by converting glutamine to glutamate. PurL transfers the ammonia molecule to FGAR to form FGAM in an ATP-dependent manner. PurS interacts with PurQ and PurL and is thought to assist in the transfer of the ammonia molecule from PurQ to PurL. The sequence is that of Phosphoribosylformylglycinamidine synthase subunit PurL from Mycobacteroides abscessus (strain ATCC 19977 / DSM 44196 / CCUG 20993 / CIP 104536 / JCM 13569 / NCTC 13031 / TMC 1543 / L948) (Mycobacterium abscessus).